Reading from the N-terminus, the 164-residue chain is uncharacterized protein (164 aa).

The tract at residues 46–142 (GRSPEQKEHV…APDNSIYDTL (97 aa)) is disordered.

This is an uncharacterized protein from Caenorhabditis elegans.